Consider the following 582-residue polypeptide: Semenogelin-2 (582 aa).

A signal peptide spans 1 to 23; the sequence is MKSIILFVLSLLLILEKQAAVMG. 3 disordered regions span residues 25–62, 91–190, and 272–553; these read KGGS…SKGS, HKTT…QGGS, and NLNQ…FSGA. Residues 50–59 are compositionally biased toward basic and acidic residues; it reads GQKDKQHTES. Positions 92–134 are enriched in basic residues; it reads KTTKSKQHLRRHQRLLNYKQKGRGRVKPKRHFHLIVIHRKGGQ. Composition is skewed to polar residues over residues 137-161 and 174-190; these read HGTQ…QYSN and EQAS…QGGS. Residues 293–305 are compositionally biased toward basic and acidic residues; that stretch reads TEERQPNHEEKSV. Positions 325–335 are enriched in polar residues; that stretch reads KSQNQVTIPSQ. Basic and acidic residues predominate over residues 336 to 345; the sequence is DQEHGHKENK. Positions 385–395 are enriched in polar residues; the sequence is KSQNQVAIPSQ. Positions 396-405 are enriched in basic and acidic residues; sequence DQEHGHKENK. Residues 445 to 455 are compositionally biased toward polar residues; the sequence is KSQNQVTIPSQ. Basic and acidic residues predominate over residues 456 to 465; it reads DQEHGHKENK. 2 stretches are compositionally biased toward polar residues: residues 487 to 498 and 506 to 529; these read KDVSQSSLSFQT and SQIQ…NSGK. Residues 530–546 are compositionally biased toward basic and acidic residues; it reads SADRKQDLLSHEQEGRY.

The protein belongs to the semenogelin family. In terms of assembly, interacts with SERPINA5.

It localises to the secreted. Functionally, participates in the formation of a gel matrix (sperm coagulum) entrapping the accessory gland secretions and ejaculated spermatozoa. The protein is Semenogelin-2 (SEMG2) of Macaca fascicularis (Crab-eating macaque).